The following is a 933-amino-acid chain: MSGARRPGTSKRKRNWHIEHPSFREERSQQLRRGNFKTVEAADSLSKAWLKCGEGFQDTSEILSLASEKTGITEKHLELSPKPKTETTSKNASELPNIIWSSSESDFSDEDKTLPALQRDGRHGPRADRLGDRTISCPEDEDIEDELQVIDWEVNSDKEDPGGPSECEDDKGTLDISDCDSCASLTSDDRLCEPSEPISTEILEYSSDSEKEEDPEHSLFIDSESPHKYQADFKSDARWCLVSQTDSEANSAEPTLTPQKYTVKFPKTPEYSVTKKKLLRGGLAERLQELQNRKRSAISLWRHRCVSYQMTPLGRKSGVLTVKILELHEECSMQVAVCEQLAGPPITSPPGGLAPRPGAYLKVLFTRETADHLMGHPQDIIYIFPPWQKLLIPNGSCSIILNTYFCQKAIAKETVREDLYSPDISLSRRNITLAQTFRIKDITDNSSINQTTYDSLATPGTGWTHGHEKAEQHLIVAAPLRNSLLDIVESQRAGLWSGVRVQVVVQRVYSLLSRDGARSQQGHTVGHADASGAWSCLLVQDACGMFGEVFLNSTLWKSRQLEGKSCSMSGVKVLQKATRGRTPGLFSLIDSLWPPVISLTEPSCGQPSGETKTYLPPPIFCYIFSAHPTLGQIDAIEDHISKLYQPPVVRCLKEILQTNECSTRCSFYARVIYQKPQLKNLLAQKEIWLLVTDITLQTQDERDHSLPKTLPVYIAPSCVLGPEVVEELALLVSYNLLFRDAFKDNGQIVCIERTVILPQKPLLCVPSASCDLPSPVTLDELSALTPVNSICSVQGTVVDVDESTAFSWPVCDRCGNGRLEQKPEDGGTFSCGDCSQLVLSPLQERHLHVFLDCPTRPESTVKVKLLESSISLLLMSAASEDGSYEVESVLGKEMGPLLCFVQSITTQQSSCVVTLEEIELLSTEGATAAQPPP.

3 disordered regions span residues 1–34 (MSGARRPGTSKRKRNWHIEHPSFREERSQQLRRG), 67–174 (SEKT…KGTL), and 205–224 (YSSDSEKEEDPEHSLFIDSE). 3 stretches are compositionally biased toward basic and acidic residues: residues 16–29 (WHIEHPSFREERSQ), 71–87 (GITEKHLELSPKPKTET), and 119–132 (RDGRHGPRADRLGD). Residues 138 to 148 (PEDEDIEDELQ) show a composition bias toward acidic residues. The interval 175–469 (DISDCDSCAS…GTGWTHGHEK (295 aa)) is necessary for interaction with RAD51. Over residues 214–224 (DPEHSLFIDSE) the composition is skewed to basic and acidic residues.

Found in a complex, at least composed of BLM, RAD51 and SPIDR; the complex formation is mediated by SPIDR. Interacts (via C-terminal region) with BLM; the interaction is direct. Interacts with RAD51; the interaction is direct. Interacts (via the C-terminal region) with FIGNL1 (via N-terminal one-half region); the interaction is direct.

Its subcellular location is the nucleus. Its function is as follows. Plays a role in DNA double-strand break (DBS) repair via homologous recombination (HR). Serves as a scaffolding protein that helps to promote the recruitment of DNA-processing enzymes like the helicase BLM and recombinase RAD51 to site of DNA damage, and hence contributes to maintain genomic integrity. The protein is DNA repair-scaffolding protein (Spidr) of Mus musculus (Mouse).